Here is an 88-residue protein sequence, read N- to C-terminus: Small ribosomal subunit protein uS17 (88 aa).

The protein belongs to the universal ribosomal protein uS17 family. In terms of assembly, part of the 30S ribosomal subunit.

One of the primary rRNA binding proteins, it binds specifically to the 5'-end of 16S ribosomal RNA. The chain is Small ribosomal subunit protein uS17 from Hahella chejuensis (strain KCTC 2396).